Here is a 209-residue protein sequence, read N- to C-terminus: Uracil phosphoribosyltransferase (209 aa).

5-phospho-alpha-D-ribose 1-diphosphate-binding positions include R79, R104, and 131–139 (DPMLATGGS). Uracil is bound by residues I194 and 199-201 (GDA). D200 serves as a coordination point for 5-phospho-alpha-D-ribose 1-diphosphate.

The protein belongs to the UPRTase family. Requires Mg(2+) as cofactor.

It carries out the reaction UMP + diphosphate = 5-phospho-alpha-D-ribose 1-diphosphate + uracil. It participates in pyrimidine metabolism; UMP biosynthesis via salvage pathway; UMP from uracil: step 1/1. Allosterically activated by GTP. Catalyzes the conversion of uracil and 5-phospho-alpha-D-ribose 1-diphosphate (PRPP) to UMP and diphosphate. The sequence is that of Uracil phosphoribosyltransferase from Clostridium acetobutylicum (strain ATCC 824 / DSM 792 / JCM 1419 / IAM 19013 / LMG 5710 / NBRC 13948 / NRRL B-527 / VKM B-1787 / 2291 / W).